We begin with the raw amino-acid sequence, 427 residues long: Serine--tRNA ligase (427 aa).

231–233 (TAE) is an L-serine binding site. 262–264 (RSE) serves as a coordination point for ATP. Position 285 (Glu285) interacts with L-serine. An ATP-binding site is contributed by 349-352 (EISS). An L-serine-binding site is contributed by Ser385.

This sequence belongs to the class-II aminoacyl-tRNA synthetase family. Type-1 seryl-tRNA synthetase subfamily. As to quaternary structure, homodimer. The tRNA molecule binds across the dimer.

Its subcellular location is the cytoplasm. It catalyses the reaction tRNA(Ser) + L-serine + ATP = L-seryl-tRNA(Ser) + AMP + diphosphate + H(+). It carries out the reaction tRNA(Sec) + L-serine + ATP = L-seryl-tRNA(Sec) + AMP + diphosphate + H(+). The protein operates within aminoacyl-tRNA biosynthesis; selenocysteinyl-tRNA(Sec) biosynthesis; L-seryl-tRNA(Sec) from L-serine and tRNA(Sec): step 1/1. Its function is as follows. Catalyzes the attachment of serine to tRNA(Ser). Is also able to aminoacylate tRNA(Sec) with serine, to form the misacylated tRNA L-seryl-tRNA(Sec), which will be further converted into selenocysteinyl-tRNA(Sec). This is Serine--tRNA ligase from Methylococcus capsulatus (strain ATCC 33009 / NCIMB 11132 / Bath).